The following is a 364-amino-acid chain: Fructose-bisphosphate aldolase B (364 aa).

Ala-2 is modified (N-acetylalanine). Residue Lys-13 is modified to N6-succinyllysine. A Phosphoserine modification is found at Ser-36. Thr-39 bears the Phosphothreonine mark. Arg-43 serves as a coordination point for beta-D-fructose 1,6-bisphosphate. Thr-119 is subject to Phosphothreonine. Lys-121 bears the N6-succinyllysine mark. The residue at position 132 (Ser-132) is a Phosphoserine. The Proton acceptor role is filled by Glu-188. Lys-230 acts as the Schiff-base intermediate with dihydroxyacetone-P in catalysis. Phosphoserine occurs at positions 272, 276, 299, and 301. 272 to 274 (SGG) serves as a coordination point for beta-D-fructose 1,6-bisphosphate. Residue Arg-304 participates in beta-D-fructose 1,6-bisphosphate binding. Ser-309 is modified (phosphoserine). Lys-317 carries the N6-succinyllysine modification.

This sequence belongs to the class I fructose-bisphosphate aldolase family. As to quaternary structure, homotetramer. Interacts with BBS1, BBS2, BBS4 and BBS7. Forms a ternary complex with G6PD and TP53; this interaction is direct.

The protein localises to the cytoplasm. The protein resides in the cytosol. It localises to the cytoskeleton. Its subcellular location is the microtubule organizing center. It is found in the centrosome. The protein localises to the centriolar satellite. The catalysed reaction is beta-D-fructose 1,6-bisphosphate = D-glyceraldehyde 3-phosphate + dihydroxyacetone phosphate. It catalyses the reaction beta-D-fructose 1-phosphate = D-glyceraldehyde + dihydroxyacetone phosphate. It participates in carbohydrate degradation; glycolysis; D-glyceraldehyde 3-phosphate and glycerone phosphate from D-glucose: step 4/4. The protein operates within carbohydrate biosynthesis; gluconeogenesis. It functions in the pathway carbohydrate metabolism; fructose metabolism. Functionally, catalyzes the aldol cleavage of fructose 1,6-biphosphate to form two triosephosphates dihydroxyacetone phosphate and D-glyceraldehyde 3-phosphate in glycolysis as well as the reverse stereospecific aldol addition reaction in gluconeogenesis. In fructolysis, metabolizes fructose 1-phosphate derived from the phosphorylation of dietary fructose by fructokinase into dihydroxyacetone phosphate and D-glyceraldehyde. Acts as an adapter independently of its enzymatic activity, exerts a tumor suppressor role by stabilizing the ternary complex with G6PD and TP53 to inhibit G6PD activity and keep oxidative pentose phosphate metabolism in check. This chain is Fructose-bisphosphate aldolase B (ALDOB), found in Bos taurus (Bovine).